The chain runs to 143 residues: Ponticulin (143 aa).

Residues 1–22 form the signal peptide; that stretch reads MLVLRNLLALVTLALLFTLSSA. A glycan (N-linked (GlcNAc...) asparagine) is linked at Asn111. Residue Ser118 is the site of GPI-like-anchor amidated serine attachment. The propeptide at 119-143 is removed in mature form; it reads SSGSTVMIGLASSLLFAFATLLALF.

The protein belongs to the ponticulin family. Monomer. Disulfide bond(s) stabilize the native, actin-binding conformation of ponticulin. In terms of processing, the GPI-like-anchor contains a phosphoceramide group, rather than a phosphatidyl group.

The protein resides in the cell membrane. Its function is as follows. Binds F-actin and nucleates actin assembly. Major high affinity link between the plasma membrane and the cortical actin network. This is Ponticulin (ponA) from Dictyostelium discoideum (Social amoeba).